The primary structure comprises 281 residues: Ribosomal protein L11 methyltransferase (281 aa).

The S-adenosyl-L-methionine site is built by Thr-133, Gly-154, Asp-175, and Asn-216.

Belongs to the methyltransferase superfamily. PrmA family.

The protein resides in the cytoplasm. It carries out the reaction L-lysyl-[protein] + 3 S-adenosyl-L-methionine = N(6),N(6),N(6)-trimethyl-L-lysyl-[protein] + 3 S-adenosyl-L-homocysteine + 3 H(+). Its function is as follows. Methylates ribosomal protein L11. This is Ribosomal protein L11 methyltransferase from Campylobacter jejuni (strain RM1221).